Consider the following 87-residue polypeptide: Small ribosomal subunit protein bS18 (87 aa).

Belongs to the bacterial ribosomal protein bS18 family. Part of the 30S ribosomal subunit. Forms a tight heterodimer with protein bS6.

In terms of biological role, binds as a heterodimer with protein bS6 to the central domain of the 16S rRNA, where it helps stabilize the platform of the 30S subunit. The polypeptide is Small ribosomal subunit protein bS18 (Campylobacter hominis (strain ATCC BAA-381 / DSM 21671 / CCUG 45161 / LMG 19568 / NCTC 13146 / CH001A)).